The sequence spans 49 residues: Defensin Tm-AMP-D1.2 (49 aa).

4 disulfide bridges follow: cysteine 3–cysteine 49, cysteine 14–cysteine 34, cysteine 20–cysteine 43, and cysteine 24–cysteine 45.

Functionally, plant defense peptide. This Triticum monococcum (Einkorn wheat) protein is Defensin Tm-AMP-D1.2.